Consider the following 483-residue polypeptide: Malonate-semialdehyde dehydrogenase 2 (483 aa).

5 residues coordinate NAD(+): Phe-152, Lys-176, Glu-179, Arg-180, and Ser-229. Cys-284 functions as the Nucleophile in the catalytic mechanism. Position 384 (Glu-384) interacts with NAD(+).

The protein belongs to the aldehyde dehydrogenase family. IolA subfamily. As to quaternary structure, homotetramer.

The catalysed reaction is 3-oxopropanoate + NAD(+) + CoA + H2O = hydrogencarbonate + acetyl-CoA + NADH + H(+). It catalyses the reaction 2-methyl-3-oxopropanoate + NAD(+) + CoA + H2O = propanoyl-CoA + hydrogencarbonate + NADH + H(+). The protein operates within polyol metabolism; myo-inositol degradation into acetyl-CoA; acetyl-CoA from myo-inositol: step 7/7. Its function is as follows. Catalyzes the oxidation of malonate semialdehyde (MSA) and methylmalonate semialdehyde (MMSA) into acetyl-CoA and propanoyl-CoA, respectively. Is involved in a myo-inositol catabolic pathway. Bicarbonate, and not CO2, is the end-product of the enzymatic reaction. The sequence is that of Malonate-semialdehyde dehydrogenase 2 from Geobacillus thermodenitrificans (strain NG80-2).